The primary structure comprises 457 residues: D(1B) dopamine receptor (457 aa).

At 1 to 41 (MYQPFQHLDSDQVASWQSPEMLMNKSVSRESQRRKELVAGQ) the chain is on the extracellular side. The N-linked (GlcNAc...) asparagine glycan is linked to N24. Residues 42 to 67 (IVTGSLLLLLIFWTLFGNILVCTAVM) form a helical membrane-spanning segment. Over 68-78 (RFRHLRSRVTN) the chain is Cytoplasmic. A helical transmembrane segment spans residues 79–105 (IFIVSLAVSDLLVALLVMPWKAVAEVA). Over 106–114 (GHWPFGAFC) the chain is Extracellular. The cysteines at positions 114 and 199 are disulfide-linked. A helical membrane pass occupies residues 115 to 137 (DIWVAFDIMCSTASILNLCVISV). The Cytoplasmic portion of the chain corresponds to 138–156 (DRYWAISSPFRYERKMTQR). The chain crosses the membrane as a helical span at residues 157–181 (VALLMISTAWALSVLISFIPVQLSW). Over 182–205 (HKSETEDHLLSNHSTGNCDSSLNR) the chain is Extracellular. A helical transmembrane segment spans residues 206-231 (TYAISSSLISFYIPVAIMIVTYTRIY). Residues 232–282 (RIAQIQIKRISTLERAAEHAQSCRSNRVDSCSRHHQTSLRTSIKKETKVLK) lie on the Cytoplasmic side of the membrane. A helical membrane pass occupies residues 283–309 (TLSIIMGVFVCCWLPFFILNCMVPFCD). Topologically, residues 310–326 (RSPGHPQAGLPCVSETT) are extracellular. Residues 327–351 (FDIFVWFGWANSSLNPIIYAFNADF) form a helical membrane-spanning segment. At 352–457 (RKVFSSLLGC…ITPSMSNGIH (106 aa)) the chain is on the cytoplasmic side. C361 carries the S-palmitoyl cysteine lipid modification.

It belongs to the G-protein coupled receptor 1 family. As to expression, brain and kidney.

Its subcellular location is the cell membrane. Dopamine receptor whose activity is mediated by G proteins which activate adenylyl cyclase. The polypeptide is D(1B) dopamine receptor (drd5) (Xenopus laevis (African clawed frog)).